Here is a 319-residue protein sequence, read N- to C-terminus: tRNA dimethylallyltransferase (319 aa).

26-33 (GPTAAGKS) contacts ATP. 28–33 (TAAGKS) lines the substrate pocket. Positions 51 to 54 (DSMQ) are interaction with substrate tRNA.

It belongs to the IPP transferase family. As to quaternary structure, monomer. Requires Mg(2+) as cofactor.

It catalyses the reaction adenosine(37) in tRNA + dimethylallyl diphosphate = N(6)-dimethylallyladenosine(37) in tRNA + diphosphate. Its function is as follows. Catalyzes the transfer of a dimethylallyl group onto the adenine at position 37 in tRNAs that read codons beginning with uridine, leading to the formation of N6-(dimethylallyl)adenosine (i(6)A). In Salinispora tropica (strain ATCC BAA-916 / DSM 44818 / JCM 13857 / NBRC 105044 / CNB-440), this protein is tRNA dimethylallyltransferase.